The primary structure comprises 630 residues: Elongation factor 4 (630 aa).

Residues 1-22 (MTVARNRAGAGPGKGSPISSFA) form a disordered region. The tr-type G domain occupies 30–211 (ARIRNFCIIA…EVVRQVPAPV (182 aa)). Residues 42–47 (DHGKST) and 158–161 (NKID) contribute to the GTP site.

It belongs to the TRAFAC class translation factor GTPase superfamily. Classic translation factor GTPase family. LepA subfamily.

It localises to the cell membrane. The catalysed reaction is GTP + H2O = GDP + phosphate + H(+). In terms of biological role, required for accurate and efficient protein synthesis under certain stress conditions. May act as a fidelity factor of the translation reaction, by catalyzing a one-codon backward translocation of tRNAs on improperly translocated ribosomes. Back-translocation proceeds from a post-translocation (POST) complex to a pre-translocation (PRE) complex, thus giving elongation factor G a second chance to translocate the tRNAs correctly. Binds to ribosomes in a GTP-dependent manner. This is Elongation factor 4 from Rhodococcus opacus (strain B4).